Here is a 481-residue protein sequence, read N- to C-terminus: Proline--tRNA ligase 2 (481 aa).

This sequence belongs to the class-II aminoacyl-tRNA synthetase family. ProS type 3 subfamily. Homodimer.

The protein resides in the cytoplasm. The catalysed reaction is tRNA(Pro) + L-proline + ATP = L-prolyl-tRNA(Pro) + AMP + diphosphate. Catalyzes the attachment of proline to tRNA(Pro) in a two-step reaction: proline is first activated by ATP to form Pro-AMP and then transferred to the acceptor end of tRNA(Pro). The polypeptide is Proline--tRNA ligase 2 (Clostridioides difficile (strain 630) (Peptoclostridium difficile)).